Here is a 424-residue protein sequence, read N- to C-terminus: Serine/threonine-protein kinase H1 (424 aa).

The N-myristoyl glycine moiety is linked to residue G2. C3 carries the S-palmitoyl cysteine lipid modification. The interval A59–R79 is disordered. The Protein kinase domain occupies Y98 to V355. ATP is bound by residues I104–V112 and K127. Residue D218 is the Proton acceptor of the active site. Residues R378 to E408 are disordered. Residues S380 and S381 each carry the phosphoserine; by autocatalysis modification. Residues S381 to T398 are compositionally biased toward low complexity.

Belongs to the protein kinase superfamily. CAMK Ser/Thr protein kinase family. Homodimer. Autophosphorylated on serine residues. Post-translationally, myristoylated. Required for membrane association. Prerequisite for palmitoylation to occur. In terms of processing, palmitoylated.

It is found in the golgi apparatus. The protein localises to the cytoplasm. It localises to the cytoskeleton. The protein resides in the microtubule organizing center. Its subcellular location is the centrosome. It is found in the nucleus speckle. The protein localises to the endoplasmic reticulum membrane. It localises to the cell membrane. The catalysed reaction is L-seryl-[protein] + ATP = O-phospho-L-seryl-[protein] + ADP + H(+). It catalyses the reaction L-threonyl-[protein] + ATP = O-phospho-L-threonyl-[protein] + ADP + H(+). Its activity is regulated as follows. Activity depends on Ca(2+) concentration. In terms of biological role, serine/threonine protein kinase that may be involved in the regulation of pre-mRNA processing. It may phosphorylate components of nuclear splice factor compartments (SFC), such as non-snRNP splicing factors containing a serine/arginine-rich domain (SR proteins). Reversible phosphorylation of SR proteins may cause their release into the nucleoplasm and change their local concentration, thereby influencing alternative splicing. In Mus musculus (Mouse), this protein is Serine/threonine-protein kinase H1 (Pskh1).